The chain runs to 117 residues: S-adenosylmethionine decarboxylase proenzyme (117 aa).

The Schiff-base intermediate with substrate; via pyruvic acid role is filled by S63. S63 is modified (pyruvic acid (Ser); by autocatalysis). The active-site Proton acceptor; for processing activity is H68. The active-site Proton donor; for catalytic activity is C83.

The protein belongs to the prokaryotic AdoMetDC family. Type 1 subfamily. As to quaternary structure, heterotetramer of two alpha and two beta chains arranged as a dimer of alpha/beta heterodimers. The cofactor is pyruvate. Is synthesized initially as an inactive proenzyme. Formation of the active enzyme involves a self-maturation process in which the active site pyruvoyl group is generated from an internal serine residue via an autocatalytic post-translational modification. Two non-identical subunits are generated from the proenzyme in this reaction, and the pyruvate is formed at the N-terminus of the alpha chain, which is derived from the carboxyl end of the proenzyme. The post-translation cleavage follows an unusual pathway, termed non-hydrolytic serinolysis, in which the side chain hydroxyl group of the serine supplies its oxygen atom to form the C-terminus of the beta chain, while the remainder of the serine residue undergoes an oxidative deamination to produce ammonia and the pyruvoyl group blocking the N-terminus of the alpha chain.

It catalyses the reaction S-adenosyl-L-methionine + H(+) = S-adenosyl 3-(methylsulfanyl)propylamine + CO2. It functions in the pathway amine and polyamine biosynthesis; S-adenosylmethioninamine biosynthesis; S-adenosylmethioninamine from S-adenosyl-L-methionine: step 1/1. In terms of biological role, catalyzes the decarboxylation of S-adenosylmethionine to S-adenosylmethioninamine (dcAdoMet), the propylamine donor required for the synthesis of the polyamines spermine and spermidine from the diamine putrescine. This is S-adenosylmethionine decarboxylase proenzyme from Methanococcus aeolicus (strain ATCC BAA-1280 / DSM 17508 / OCM 812 / Nankai-3).